A 240-amino-acid chain; its full sequence is Uridylate kinase (240 aa).

12–15 (KLSG) contacts ATP. Residues 20–25 (GDQGKG) are involved in allosteric activation by GTP. Gly54 provides a ligand contact to UMP. ATP contacts are provided by Gly55 and Arg59. Residues Asp74 and 135 to 142 (TGSPYFST) contribute to the UMP site. Asn163, Tyr169, and Asp172 together coordinate ATP.

The protein belongs to the UMP kinase family. In terms of assembly, homohexamer.

It is found in the cytoplasm. The catalysed reaction is UMP + ATP = UDP + ADP. It participates in pyrimidine metabolism; CTP biosynthesis via de novo pathway; UDP from UMP (UMPK route): step 1/1. Its activity is regulated as follows. Allosterically activated by GTP. Inhibited by UTP. Functionally, catalyzes the reversible phosphorylation of UMP to UDP. The chain is Uridylate kinase from Ligilactobacillus salivarius (strain UCC118) (Lactobacillus salivarius).